A 178-amino-acid polypeptide reads, in one-letter code: Ribulose bisphosphate carboxylase small subunit, chloroplastic (178 aa).

A chloroplast-targeting transit peptide spans 1-54 (MALISSAAVTTINRAPVQANLATPFTGLKSSAGFPVTKKNNDITSITSNGSRVN).

The protein belongs to the RuBisCO small chain family. Heterohexadecamer of 8 large and 8 small subunits.

It is found in the plastid. It localises to the chloroplast. RuBisCO catalyzes two reactions: the carboxylation of D-ribulose 1,5-bisphosphate, the primary event in carbon dioxide fixation, as well as the oxidative fragmentation of the pentose substrate. Both reactions occur simultaneously and in competition at the same active site. Although the small subunit is not catalytic it is essential for maximal activity. This is Ribulose bisphosphate carboxylase small subunit, chloroplastic from Trifolium repens (Creeping white clover).